A 2286-amino-acid chain; its full sequence is Non-reducing polyketide synthase fsr1 (2286 aa).

Positions 7–342 (LYLFGDQTFD…IYTALKKTSL (336 aa)) are N-terminal acylcarrier protein transacylase domain (SAT). In terms of domain architecture, Ketosynthase family 3 (KS3) spans 368–805 (KPKLAIVAMS…GGNSALLIQD (438 aa)). Active-site for beta-ketoacyl synthase activity residues include cysteine 540, histidine 675, and histidine 722. An acyl/malonyl transferases region spans residues 905-1195 (VFTFTGQGAQ…GMVKPTLGQQ (291 aa)). The For acyl/malonyl transferase activity role is filled by serine 996. An N-terminal hotdog fold region spans residues 1285–1417 (HSVVEESGDS…CVVLFKDRSH (133 aa)). The region spanning 1285-1591 (HSVVEESGDS…IQGVPRRVLK (307 aa)) is the PKS/mFAS DH domain. The interval 1296-1588 (KTGIVVEADI…QIAIQGVPRR (293 aa)) is product template (PT) domainn. The active-site Proton acceptor; for dehydratase activity is histidine 1317. The C-terminal hotdog fold stretch occupies residues 1444-1591 (SARFNRPMAY…IQGVPRRVLK (148 aa)). Aspartate 1504 functions as the Proton donor; for dehydratase activity in the catalytic mechanism. A disordered region spans residues 1600–1639 (KKGQPQRQTQDKPRNTPSQTKDSTPKPAQNKPAAKVEPPK). The Carrier 1 domain maps to 1637-1712 (PPKFSTAIRI…DLRAFLGADE (76 aa)). Serine 1671 carries the O-(pantetheine 4'-phosphoryl)serine modification. Positions 1716 to 1735 (ESSSSAASDSGRDTTTTGSA) are disordered. The region spanning 1748 to 1823 (EVEFERALEI…DLKTMLAREM (76 aa)) is the Carrier 2 domain. At serine 1782 the chain carries O-(pantetheine 4'-phosphoryl)serine. The tract at residues 1897–2145 (VTGASGGLGS…NWTPVNDIAD (249 aa)) is reductase (R) domain.

The protein operates within polyketide biosynthesis. In terms of biological role, non-reducing polyketide synthase; part of the gene cluster that mediates the biosynthesis of fusarubins, highly pigmented naphthoquinones responsible for the coloration of the fruiting bodies. The non-reducing polyketide synthase FSR1 is responsible for the condensation of seven acetyl-CoA units to yield a haptaketide. After rings A and B are formed by aldol-type cyclization, the PKS-derived product is released as 6-O-demethylfusarubinaldehyde. Then, two hydroxyl groups at C-5 and C-10 are incorporated by FSR3, and simultaneously hydroxyl groups at C-6 and C-8 are methylated by FSR2. The aldehyde is, on the one hand, reduced by FSR3 to 8-O-methylfusarubin alcohol, which equilibrates mainly with 8-O-methylfusarubin and only small amounts of 8-O-methylnectriafurone. On the other hand, the aldehyde can be oxidized to form 8-O-methylfusarubinic acid, a reaction driven by FSR3 equilibrating with 8-O-methylfusarubinlactone, finally resulting in 8-O-methylanhydrofusarubinlactol after a further reduction step and loss of water. 8-O-Methylfusarubinic acid can also undergo decarboxylation, resulting in 8-O-methyl-13-hydroxynorjavanicin after another hydroxylation step at C-13. Both steps are most likely also accomplished by FSR3. No enzymatic function has been determined so far for either FSR4 and FSR5. Their deletion does not alter the product spectrum, but the possibility that they catalyze specific enzymatic steps during perithecium development cannot be ruled out. FSR4 might possess a regulatory function in the biosynthesis of fusarubins. This is Non-reducing polyketide synthase fsr1 from Gibberella fujikuroi (strain CBS 195.34 / IMI 58289 / NRRL A-6831) (Bakanae and foot rot disease fungus).